The sequence spans 466 residues: 3-isopropylmalate dehydratase large subunit (466 aa).

[4Fe-4S] cluster is bound by residues Cys-347, Cys-407, and Cys-410.

Belongs to the aconitase/IPM isomerase family. LeuC type 1 subfamily. In terms of assembly, heterodimer of LeuC and LeuD. [4Fe-4S] cluster serves as cofactor.

It catalyses the reaction (2R,3S)-3-isopropylmalate = (2S)-2-isopropylmalate. Its pathway is amino-acid biosynthesis; L-leucine biosynthesis; L-leucine from 3-methyl-2-oxobutanoate: step 2/4. In terms of biological role, catalyzes the isomerization between 2-isopropylmalate and 3-isopropylmalate, via the formation of 2-isopropylmaleate. The chain is 3-isopropylmalate dehydratase large subunit from Pectobacterium carotovorum subsp. carotovorum (strain PC1).